Reading from the N-terminus, the 196-residue chain is MTLEKIIEKLAAKSSILISPITVKENLAYKVEPNFLLPFLKALKESEELRFTVLTDLFGSDFPEKAKRFEVVYNLLSLKLNKRLIIKTYVSEHESIPSAMSIFNATCWYEREVYDMFGINFDGNDDKRRILTDYEFEGHPLRKDFPLTGYTQVKYDEQTKKVAYEPVNLDIEYREFDFSSPWHSPTYTLPGDEKAK.

This sequence belongs to the complex I 30 kDa subunit family. NDH-1 is composed of 14 different subunits. Subunits NuoB, C, D, E, F, and G constitute the peripheral sector of the complex.

Its subcellular location is the cell inner membrane. It carries out the reaction a quinone + NADH + 5 H(+)(in) = a quinol + NAD(+) + 4 H(+)(out). NDH-1 shuttles electrons from NADH, via FMN and iron-sulfur (Fe-S) centers, to quinones in the respiratory chain. The immediate electron acceptor for the enzyme in this species is believed to be ubiquinone. Couples the redox reaction to proton translocation (for every two electrons transferred, four hydrogen ions are translocated across the cytoplasmic membrane), and thus conserves the redox energy in a proton gradient. The sequence is that of NADH-quinone oxidoreductase subunit C from Rickettsia bellii (strain RML369-C).